The primary structure comprises 181 residues: Acireductone dioxygenase (181 aa).

Fe(2+)-binding residues include histidine 97, histidine 99, glutamate 103, and histidine 141. Histidine 97, histidine 99, glutamate 103, and histidine 141 together coordinate Ni(2+).

This sequence belongs to the acireductone dioxygenase (ARD) family. In terms of assembly, monomer. It depends on Fe(2+) as a cofactor. Requires Ni(2+) as cofactor.

It carries out the reaction 1,2-dihydroxy-5-(methylsulfanyl)pent-1-en-3-one + O2 = 3-(methylsulfanyl)propanoate + CO + formate + 2 H(+). It catalyses the reaction 1,2-dihydroxy-5-(methylsulfanyl)pent-1-en-3-one + O2 = 4-methylsulfanyl-2-oxobutanoate + formate + 2 H(+). The protein operates within amino-acid biosynthesis; L-methionine biosynthesis via salvage pathway; L-methionine from S-methyl-5-thio-alpha-D-ribose 1-phosphate: step 5/6. Functionally, catalyzes 2 different reactions between oxygen and the acireductone 1,2-dihydroxy-3-keto-5-methylthiopentene (DHK-MTPene) depending upon the metal bound in the active site. Fe-containing acireductone dioxygenase (Fe-ARD) produces formate and 2-keto-4-methylthiobutyrate (KMTB), the alpha-ketoacid precursor of methionine in the methionine recycle pathway. Ni-containing acireductone dioxygenase (Ni-ARD) produces methylthiopropionate, carbon monoxide and formate, and does not lie on the methionine recycle pathway. In Stutzerimonas stutzeri (strain A1501) (Pseudomonas stutzeri), this protein is Acireductone dioxygenase.